Consider the following 82-residue polypeptide: MSADKKQNLQDTFLNAVRKSRTPLTVFLVNGVKLQGVVTWFDNFCILLRGDGRPPQLVYKHAISTIAPSAPVQLFDEEMGGD.

The Sm domain maps to 11-72; it reads DTFLNAVRKS…ISTIAPSAPV (62 aa).

It belongs to the Hfq family. In terms of assembly, homohexamer.

Its function is as follows. RNA chaperone that binds small regulatory RNA (sRNAs) and mRNAs to facilitate mRNA translational regulation in response to envelope stress, environmental stress and changes in metabolite concentrations. Also binds with high specificity to tRNAs. This Hyphomonas neptunium (strain ATCC 15444) protein is RNA-binding protein Hfq.